We begin with the raw amino-acid sequence, 938 residues long: Bifunctional uridylyltransferase/uridylyl-removing enzyme (938 aa).

A uridylyltransferase region spans residues 1–379 (MPPRLRPTHL…PGRAQKRKPL (379 aa)). Residues 380–733 (DEPGFHEVGG…GRIRSELNAA (354 aa)) form a uridylyl-removing region. The HD domain maps to 495–617 (VDEHTLRAVG…VQSPERLRLL (123 aa)). ACT domains are found at residues 734–813 (EVVV…PVAR) and 845–924 (VVEA…TAQA).

It belongs to the GlnD family. Requires Mg(2+) as cofactor.

The enzyme catalyses [protein-PII]-L-tyrosine + UTP = [protein-PII]-uridylyl-L-tyrosine + diphosphate. It catalyses the reaction [protein-PII]-uridylyl-L-tyrosine + H2O = [protein-PII]-L-tyrosine + UMP + H(+). Its activity is regulated as follows. Uridylyltransferase (UTase) activity is inhibited by glutamine, while glutamine activates uridylyl-removing (UR) activity. Its function is as follows. Modifies, by uridylylation and deuridylylation, the PII regulatory proteins (GlnB and homologs), in response to the nitrogen status of the cell that GlnD senses through the glutamine level. Under low glutamine levels, catalyzes the conversion of the PII proteins and UTP to PII-UMP and PPi, while under higher glutamine levels, GlnD hydrolyzes PII-UMP to PII and UMP (deuridylylation). Thus, controls uridylylation state and activity of the PII proteins, and plays an important role in the regulation of nitrogen assimilation and metabolism. The sequence is that of Bifunctional uridylyltransferase/uridylyl-removing enzyme from Phenylobacterium zucineum (strain HLK1).